The primary structure comprises 319 residues: Formimidoylglutamase (319 aa).

The Mn(2+) site is built by His131, Asp154, His156, Asp158, Cys248, and Asp250.

Belongs to the arginase family. Requires Mn(2+) as cofactor.

The enzyme catalyses N-formimidoyl-L-glutamate + H2O = formamide + L-glutamate. It participates in amino-acid degradation; L-histidine degradation into L-glutamate; L-glutamate from N-formimidoyl-L-glutamate (hydrolase route): step 1/1. In terms of biological role, catalyzes the conversion of N-formimidoyl-L-glutamate to L-glutamate and formamide. The polypeptide is Formimidoylglutamase (Legionella pneumophila subsp. pneumophila (strain Philadelphia 1 / ATCC 33152 / DSM 7513)).